The sequence spans 265 residues: DNA repair protein RecO (265 aa).

This sequence belongs to the RecO family.

Functionally, involved in DNA repair and RecF pathway recombination. The chain is DNA repair protein RecO from Mycolicibacterium paratuberculosis (strain ATCC BAA-968 / K-10) (Mycobacterium paratuberculosis).